We begin with the raw amino-acid sequence, 198 residues long: Holliday junction branch migration complex subunit RuvA (198 aa).

Residues 1–64 (MYEYIKGEYM…EDFIGLYGFE (64 aa)) are domain I. A domain II region spans residues 65–143 (SLEELEMFKM…TDELLNCIDE (79 aa)). Residues 144–154 (FDDVTQDNSLA) form a flexible linker region. The domain III stretch occupies residues 154 to 198 (AVSEALSALISLGYTEKEAEKVLRDVDKSESVENIIKSALVKLMG).

Belongs to the RuvA family. In terms of assembly, homotetramer. Forms an RuvA(8)-RuvB(12)-Holliday junction (HJ) complex. HJ DNA is sandwiched between 2 RuvA tetramers; dsDNA enters through RuvA and exits via RuvB. An RuvB hexamer assembles on each DNA strand where it exits the tetramer. Each RuvB hexamer is contacted by two RuvA subunits (via domain III) on 2 adjacent RuvB subunits; this complex drives branch migration. In the full resolvosome a probable DNA-RuvA(4)-RuvB(12)-RuvC(2) complex forms which resolves the HJ.

The protein resides in the cytoplasm. Functionally, the RuvA-RuvB-RuvC complex processes Holliday junction (HJ) DNA during genetic recombination and DNA repair, while the RuvA-RuvB complex plays an important role in the rescue of blocked DNA replication forks via replication fork reversal (RFR). RuvA specifically binds to HJ cruciform DNA, conferring on it an open structure. The RuvB hexamer acts as an ATP-dependent pump, pulling dsDNA into and through the RuvAB complex. HJ branch migration allows RuvC to scan DNA until it finds its consensus sequence, where it cleaves and resolves the cruciform DNA. This chain is Holliday junction branch migration complex subunit RuvA, found in Clostridium botulinum (strain Eklund 17B / Type B).